Consider the following 309-residue polypeptide: Serine/threonine-protein phosphatase CPPED1 (309 aa).

The segment at 47–250 is catalytic; sequence WRIGDCDSGG…FSGHYHRNAG (204 aa). Residues D51, D88, N125, and H244 each contribute to the a divalent metal cation site.

The protein belongs to the metallophosphoesterase superfamily. CPPED1 family. It depends on a divalent metal cation as a cofactor.

It is found in the cytoplasm. The enzyme catalyses O-phospho-L-seryl-[protein] + H2O = L-seryl-[protein] + phosphate. It carries out the reaction O-phospho-L-threonyl-[protein] + H2O = L-threonyl-[protein] + phosphate. In terms of biological role, protein phosphatase involved in the dephosphorylation of AKT kinase family. In Danio rerio (Zebrafish), this protein is Serine/threonine-protein phosphatase CPPED1 (cpped1).